The sequence spans 506 residues: Cobyric acid synthase (506 aa).

In terms of domain architecture, GATase cobBQ-type spans 251–448 (DITIAIVQLP…LHGLFDSDAF (198 aa)). C332 serves as the catalytic Nucleophile. Residue H440 is part of the active site.

The protein belongs to the CobB/CobQ family. CobQ subfamily.

The protein operates within cofactor biosynthesis; adenosylcobalamin biosynthesis. Catalyzes amidations at positions B, D, E, and G on adenosylcobyrinic A,C-diamide. NH(2) groups are provided by glutamine, and one molecule of ATP is hydrogenolyzed for each amidation. The polypeptide is Cobyric acid synthase (Salmonella choleraesuis (strain SC-B67)).